The primary structure comprises 411 residues: Alpha-N-acetylgalactosaminidase (411 aa).

The N-terminal stretch at 1–17 (MLLKTVLLLGHVAQVLM) is a signal peptide. Cystine bridges form between cysteine 38-cysteine 80 and cysteine 42-cysteine 49. 78–79 (DD) lines the substrate pocket. N-linked (GlcNAc...) asparagine glycosylation is present at asparagine 124. A disulfide bond links cysteine 127 and cysteine 158. A substrate-binding site is contributed by lysine 154. The active-site Nucleophile is the aspartate 156. Asparagine 177 carries N-linked (GlcNAc...) asparagine glycosylation. The cysteines at positions 187 and 209 are disulfide-linked. A substrate-binding site is contributed by serine 188. Asparagine 201 carries N-linked (GlcNAc...) asparagine glycosylation. Arginine 213 and aspartate 217 together coordinate substrate. The active-site Proton donor is aspartate 217. 2 positions are modified to phosphoserine: serine 322 and serine 332. N-linked (GlcNAc...) asparagine glycans are attached at residues asparagine 359 and asparagine 385.

Belongs to the glycosyl hydrolase 27 family. As to quaternary structure, homodimer.

Its subcellular location is the lysosome. The enzyme catalyses Cleavage of non-reducing alpha-(1-&gt;3)-N-acetylgalactosamine residues from human blood group A and AB mucin glycoproteins, Forssman hapten and blood group A lacto series glycolipids.. The catalysed reaction is a neolactoside IV(3)-alpha-GalNAc,IV(2)-alpha-Fuc-nLc4Cer(d18:1(4E)) + H2O = a neolactoside IV(2)-alpha-Fuc-nLc4Cer(d18:1(4E)) + N-acetyl-alpha-D-galactosamine. It carries out the reaction a neolactoside IV(3)-alpha-GalNAc,IV(2)-alpha-Fuc-nLc4Cer(d18:0) + H2O = a neolactoside IV(2)-alpha-Fuc-nLc4Cer(d18:0) + N-acetyl-alpha-D-galactosamine. It catalyses the reaction a globoside IV3GalNAc-Gb4Cer + H2O = N-acetyl-alpha-D-galactosamine + a globoside Gb4Cer. Functionally, removes terminal alpha-N-acetylgalactosamine residues from glycolipids and glycopeptides. Required for the breakdown of glycolipids. This is Alpha-N-acetylgalactosaminidase from Homo sapiens (Human).